A 353-amino-acid polypeptide reads, in one-letter code: Phospho-furanose lactonase (353 aa).

Residues histidine 25, histidine 27, lysine 153, histidine 186, and histidine 214 each contribute to the Zn(2+) site. The residue at position 153 (lysine 153) is an N6-carboxylysine. Lysine 244–tyrosine 245 contributes to the substrate binding site. Zn(2+) is bound at residue aspartate 272. Arginine 275–tyrosine 278 serves as a coordination point for substrate.

It belongs to the metallo-dependent hydrolases superfamily. Phosphotriesterase family. It depends on Zn(2+) as a cofactor.

It catalyses the reaction a 1,4-lactone + H2O = a 4-hydroxyacid + H(+). The enzyme catalyses D-xylono-1,4-lactone 5-phosphate + H2O = 5-phospho-D-xylonate + H(+). The catalysed reaction is L-arabino-1,4-lactone 5-phosphate + H2O = 5-phospho-L-arabinonate + H(+). Its function is as follows. Catalyzes the hydrolysis of D-xylono-1,4-lactone-5-phosphate and L-arabino-1,4-lactone-5-phosphate. Also able to hydrolyze carboxy 1,4-lactones. The protein is Phospho-furanose lactonase of Mycoplasmopsis agalactiae (strain NCTC 10123 / CIP 59.7 / PG2) (Mycoplasma agalactiae).